The primary structure comprises 285 residues: Aldo-keto reductase (285 aa).

165–175 serves as a coordination point for NADP(+); it reads APLAGGILTGK.

It belongs to the aldo/keto reductase family. Aldo/keto reductase 2 subfamily.

The sequence is that of Aldo-keto reductase from Babesia bovis.